The primary structure comprises 71 residues: Serine palmitoyltransferase small subunit A (71 aa).

Residues 1–12 lie on the Cytoplasmic side of the membrane; it reads MAGMALARAWKQ. A helical membrane pass occupies residues 13-29; it reads MSWFYYQYLLVTALYML. At 30-34 the chain is on the lumenal side; it reads EPWER. The chain crosses the membrane as a helical span at residues 35–57; that stretch reads TVFNSMLVSIVGMALYTGYVFMP. The Cytoplasmic segment spans residues 58-71; sequence QHIMAILHYFEIVQ.

The protein belongs to the SPTSS family. SPTSSA subfamily. Component of the serine palmitoyltransferase (SPT) complex, which is composed of SPTLC1, SPTLC2 or SPTLC3 and SPTSSA or SPTSSB. The heterodimer consisting of SPTLC1 and SPTLC2/SPTLC3 forms the catalytic core of the enzyme, while SPTSSA or SPTSSB subunits determine substrate specificity. SPT also interacts with ORMDL proteins, especially ORMDL3, which negatively regulate SPT activity in the presence of ceramides. Interacts with MBOAT7; the interaction plays a role in MBOAT7 localization to mitochondria-associated membranes.

Its subcellular location is the endoplasmic reticulum membrane. Its pathway is lipid metabolism; sphingolipid metabolism. Functionally, component of the serine palmitoyltransferase multisubunit enzyme (SPT) that catalyzes the initial and rate-limiting step in sphingolipid biosynthesis by condensing L-serine and activated acyl-CoA (most commonly palmitoyl-CoA) to form long-chain bases. The SPT complex is composed of SPTLC1, SPTLC2 or SPTLC3 and SPTSSA or SPTSSB. Within this complex, the heterodimer consisting of SPTLC1 and SPTLC2/SPTLC3 forms the catalytic core. Within the SPT complex, SPTSSA stimulates the catalytic activity and plays a role in substrate specificity, which depends upon the overall complex composition. The SPTLC1-SPTLC2-SPTSSA complex shows a strong preference for C16-CoA substrate, while the SPTLC1-SPTLC3-SPTSSA isozyme uses both C14-CoA and C16-CoA as substrates, with a slight preference for C14-CoA. Independently of its action as a SPT component, may be involved in MBOAT7 localization to mitochondria-associated membranes, a membrane bridge between the endoplasmic reticulum and mitochondria, may hence affect MBOAT7-catalyzed incorporation of arachidonic acid into phosphatidylinositol. The sequence is that of Serine palmitoyltransferase small subunit A from Homo sapiens (Human).